The following is a 517-amino-acid chain: Bifunctional purine biosynthesis protein PurH (517 aa).

The region spanning 1 to 145 is the MGS-like domain; sequence MSPLALVSVS…KNHKDVSVLV (145 aa).

This sequence belongs to the PurH family.

The enzyme catalyses (6R)-10-formyltetrahydrofolate + 5-amino-1-(5-phospho-beta-D-ribosyl)imidazole-4-carboxamide = 5-formamido-1-(5-phospho-D-ribosyl)imidazole-4-carboxamide + (6S)-5,6,7,8-tetrahydrofolate. It catalyses the reaction IMP + H2O = 5-formamido-1-(5-phospho-D-ribosyl)imidazole-4-carboxamide. Its pathway is purine metabolism; IMP biosynthesis via de novo pathway; 5-formamido-1-(5-phospho-D-ribosyl)imidazole-4-carboxamide from 5-amino-1-(5-phospho-D-ribosyl)imidazole-4-carboxamide (10-formyl THF route): step 1/1. It participates in purine metabolism; IMP biosynthesis via de novo pathway; IMP from 5-formamido-1-(5-phospho-D-ribosyl)imidazole-4-carboxamide: step 1/1. The chain is Bifunctional purine biosynthesis protein PurH from Prochlorococcus marinus subsp. pastoris (strain CCMP1986 / NIES-2087 / MED4).